The sequence spans 462 residues: MTNPLWGGRFTTSSNDIMKKINESISFDQALYEEDILTSIAHCKMLVNQKIISKYEGQLIIHGLEVIQKQIESGNFEFSTDLEDIHMNIEYSLKKMIGNIAGKLHTARSRNDQIATDLKLWIRKSIKKLEQQLHKLQSTLLNIAENHYDTIMPGFTHLQIAQPVTLGHHLMAYFEMLKRDRSRWQDLYKRMNQCPAGSAALAGTSFPIDRHFIAQELGFDSPTENSIDAVSDRDYIIEFLSNASICIMHLSRLAEEIILWCSYNFKFITLSDNITTGSSIMPQKKNPDAAELIRGKTGRIFSSLNHILIVMKGLPLAYSKDMQEDKEPLFDAERNLILCIEAMNSMLNNITINSENMLKAAEHDYSTATDLADWLVKHINLSFRESHEITGQIVKLAEHNKCKIHELTLTQLQKIIPSITEDVFSVLSAKNSVTSRTSYGGTAPINVLQAIKNGRIYLENTD.

This sequence belongs to the lyase 1 family. Argininosuccinate lyase subfamily.

It is found in the cytoplasm. It catalyses the reaction 2-(N(omega)-L-arginino)succinate = fumarate + L-arginine. Its pathway is amino-acid biosynthesis; L-arginine biosynthesis; L-arginine from L-ornithine and carbamoyl phosphate: step 3/3. The polypeptide is Argininosuccinate lyase (Ehrlichia ruminantium (strain Welgevonden)).